A 570-amino-acid polypeptide reads, in one-letter code: Small ribosomal subunit protein uS2c (570 aa).

The interval 1–306 (MLNKKPPYLI…IKLNPLSTPQ (306 aa)) is N-terminal extension. 2 consecutive TRAM domains span residues 28 to 89 (KLIP…KLIK) and 104 to 169 (ALTP…VATV).

The protein belongs to the universal ribosomal protein uS2 family.

It is found in the plastid. It localises to the chloroplast. The polypeptide is Small ribosomal subunit protein uS2c (rps2-1) (Chlamydomonas reinhardtii (Chlamydomonas smithii)).